The chain runs to 496 residues: Probable cytosol aminopeptidase (496 aa).

The Mn(2+) site is built by lysine 266 and aspartate 271. The active site involves lysine 278. Residues aspartate 289, aspartate 348, and glutamate 350 each contribute to the Mn(2+) site. Arginine 352 is a catalytic residue.

This sequence belongs to the peptidase M17 family. Mn(2+) serves as cofactor.

It localises to the cytoplasm. The enzyme catalyses Release of an N-terminal amino acid, Xaa-|-Yaa-, in which Xaa is preferably Leu, but may be other amino acids including Pro although not Arg or Lys, and Yaa may be Pro. Amino acid amides and methyl esters are also readily hydrolyzed, but rates on arylamides are exceedingly low.. It catalyses the reaction Release of an N-terminal amino acid, preferentially leucine, but not glutamic or aspartic acids.. Its function is as follows. Presumably involved in the processing and regular turnover of intracellular proteins. Catalyzes the removal of unsubstituted N-terminal amino acids from various peptides. This is Probable cytosol aminopeptidase from Stutzerimonas stutzeri (strain A1501) (Pseudomonas stutzeri).